The following is a 474-amino-acid chain: Ankyrin repeat, SAM and basic leucine zipper domain-containing protein 1 (474 aa).

Positions 1-31 (MAGRLRGPAVPGGGESSDSDEDGWDIGYTER) are disordered. A phosphoserine mark is found at Ser16, Ser17, and Ser19. ANK repeat units follow at residues 43–72 (EKDEVLKRALTTGDGSLLEELLNSGMQVDS), 76–105 (FGWTPLMYAASIANVDLVRILLDRGANASF), 108–142 (DQHTVLMAACSARVPEERILKTAELLLSRNASPNA), 146–175 (KRMSPLMYAAREGHSQLVALLVGHGAEINA), 179–208 (NGYTALAWAARHGHKTTVLKLLELGADKTL), and 212–241 (DGKTPAEIAKRNKHPELFSMLSLTLNPLHG). Residues 270-333 (SYSAFGDLEI…KIMDAVEELQ (64 aa)) enclose the SAM domain.

In terms of assembly, interacts with DDX4, PIWIL1, RANBP9 and TDRD1.

Its subcellular location is the cytoplasm. Functionally, plays a central role during spermatogenesis by repressing transposable elements and preventing their mobilization, which is essential for the germline integrity. Acts via the piRNA metabolic process, which mediates the repression of transposable elements during meiosis by forming complexes composed of piRNAs and Piwi proteins and governs the methylation and subsequent repression of transposons. Its association with pi-bodies suggests a participation in the primary piRNAs metabolic process. Required prior to the pachytene stage to facilitate the production of multiple types of piRNAs, including those associated with repeats involved in the regulation of retrotransposons. May act by mediating protein-protein interactions during germ cell maturation. The sequence is that of Ankyrin repeat, SAM and basic leucine zipper domain-containing protein 1 (ASZ1) from Ornithorhynchus anatinus (Duckbill platypus).